The following is a 126-amino-acid chain: Protein ApaG (126 aa).

Positions 2–126 (ADKLYQMEVQ…MTLVAPRVLH (125 aa)) constitute an ApaG domain.

The sequence is that of Protein ApaG from Chromobacterium violaceum (strain ATCC 12472 / DSM 30191 / JCM 1249 / CCUG 213 / NBRC 12614 / NCIMB 9131 / NCTC 9757 / MK).